A 430-amino-acid chain; its full sequence is UDP-N-acetylglucosamine 1-carboxyvinyltransferase (430 aa).

22 to 23 contributes to the phosphoenolpyruvate binding site; the sequence is KN. R102 lines the UDP-N-acetyl-alpha-D-glucosamine pocket. The active-site Proton donor is C126. C126 carries the 2-(S-cysteinyl)pyruvic acid O-phosphothioketal modification. Residues 131–135, 172–175, D317, and I339 each bind UDP-N-acetyl-alpha-D-glucosamine; these read RPVDL and KVSV.

The protein belongs to the EPSP synthase family. MurA subfamily.

The protein resides in the cytoplasm. It carries out the reaction phosphoenolpyruvate + UDP-N-acetyl-alpha-D-glucosamine = UDP-N-acetyl-3-O-(1-carboxyvinyl)-alpha-D-glucosamine + phosphate. The protein operates within cell wall biogenesis; peptidoglycan biosynthesis. In terms of biological role, cell wall formation. Adds enolpyruvyl to UDP-N-acetylglucosamine. The sequence is that of UDP-N-acetylglucosamine 1-carboxyvinyltransferase from Sinorhizobium fredii (strain NBRC 101917 / NGR234).